The primary structure comprises 446 residues: Na(+)-translocating NADH-quinone reductase subunit A (446 aa).

It belongs to the NqrA family. As to quaternary structure, composed of six subunits; NqrA, NqrB, NqrC, NqrD, NqrE and NqrF.

It catalyses the reaction a ubiquinone + n Na(+)(in) + NADH + H(+) = a ubiquinol + n Na(+)(out) + NAD(+). This reaction is tightly coupled to the Na(+) pumping activity and specifically requires Na(+) for activity. Inhibited by korormicin and 2-N-heptyl-4-hydroxyquinoline N-oxide (HQNO). NQR complex catalyzes the reduction of ubiquinone-1 to ubiquinol by two successive reactions, coupled with the transport of Na(+) ions from the cytoplasm to the periplasm. NqrA to NqrE are probably involved in the second step, the conversion of ubisemiquinone to ubiquinol. This Vibrio alginolyticus protein is Na(+)-translocating NADH-quinone reductase subunit A.